The primary structure comprises 167 residues: uncharacterized protein (167 aa).

The protein belongs to the A.longa ORF167/ORF288 family.

The protein localises to the plastid. This is an uncharacterized protein from Euglena longa (Euglenophycean alga).